Here is a 324-residue protein sequence, read N- to C-terminus: MDLKHSRSVKLNDGNLMPVLGFGTFASKEIPKSKAAEATKVAIDVGFRHIDAAYFYQNEEEVGQALRDKMADGTVKREDLFYTTKIWITFLRPELVRQCLERSLKKLGLDYVDLCIIHIPIAMKPGEELLPKDANGKFIFDTVDIRDTWEALEKCKDAGLSKSIGVSNFNHKQLELILNKPRLKYKPTCNQVECHPYLNQSKLLEFCKSKDIVLVAYSALGSHRDSSWVSSDSPYLLEDPVLMTIAKKHNQTPGQVALRYQLQRGVVVLAKSFNEKRIKENFQVFDFELTPEDMKTIDSLNRNFRYSQMAFALDHPDYPFLEEY.

Residues 24 to 26 and aspartate 51 each bind NADP(+); that span reads TFA. Residue tyrosine 56 is the Proton donor of the active site. Histidine 118 contributes to the substrate binding site. NADP(+) contacts are provided by residues 167–168, glutamine 191, 217–225, and 269–281; these read SN, YSALGSHRD, and LAKS…IKEN.

It belongs to the aldo/keto reductase family. In terms of assembly, monomer. In terms of tissue distribution, expressed in lung, specifically in bronchiolar club cells, type II alveolar cells and epithelial cells of the duct of the bronchial gland (at protein level). Expressed in gastric parietal cells and in epithelial cells of the large intestine and colon (at protein level). Expressed in brown adipocytes (at protein level). Expressed in vascular endothelial cells (at protein level).

The protein localises to the cytoplasm. It carries out the reaction (2E,6E)-farnesol + NADP(+) = (2E,6E)-farnesal + NADPH + H(+). The dehydrogenase activity is inhibited by 3',3'',5',5''-tetraiodophenolphthalein, phenolphthalein, genistein, quercetin, zearalenone and diethylstilbestrol. Catalyzes the NADPH-dependent reduction of a variety of substrates including aromatic and aliphatic aldehydes, quinones, ketones, dicarbonyl compounds and 17-ketosteroids. Catalyzes the NADP(+)-dependent oxidation of aromatic, alicyclic and aliphatic alcohols, and 17beta-hydroxysteroids. To a lesser extent, can also catalyze the reduction of some aldoses and ketoses and the oxidation of some sugar alcohols. In the stomach, lung and colon tissues, mediates the reduction of farnesal and geranylgeranial into farnesol and geranylgeraniol respectively. By reducing 4-hydroxy-2-nonenal (HNE), produced during lipid peroxidation, into 1,4-dihydro-2-nonene (DHN), protects vascular endothelial cells from damage elicited by oxidized lipoproteins. This is Aldo-keto reductase family 1 member C15 from Rattus norvegicus (Rat).